A 1462-amino-acid polypeptide reads, in one-letter code: uncharacterized protein (1462 aa).

A helical membrane pass occupies residues 119-139; sequence TGYITSLCLSAILKFFSFRII. Residues Ser411 and Ser420 each carry the phosphoserine modification. One can recognise an SEC7 domain in the interval 541 to 730; the sequence is TLIESKKRKA…SEIYKAIKEN (190 aa). Residues 1102–1139 form an HEAT repeat; that stretch reads ENSEDWGLFSKLCNLLNDKNIVVRNQSLSLFHQLVNKY.

The protein localises to the cytoplasm. It localises to the golgi apparatus membrane. This is an uncharacterized protein from Schizosaccharomyces pombe (strain 972 / ATCC 24843) (Fission yeast).